Reading from the N-terminus, the 456-residue chain is DEAD-box ATP-dependent RNA helicase 10 (456 aa).

A Q motif motif is present at residues 9 to 37 (KTFAELGVREELVKACERLGWKNPSKIQA). One can recognise a Helicase ATP-binding domain in the interval 40-223 (LPFALEGKDV…RACLRNPVKI (184 aa)). 53-60 (AQTGSGKT) lines the ATP pocket. Positions 171–174 (DEAD) match the DEAD box motif. The Helicase C-terminal domain maps to 250–394 (YLVYILSEMP…EYPAEEDEVL (145 aa)). The disordered stretch occupies residues 407–456 (SAMNMKESGGRKRRGEDDEESERFLGGNKDRGNKERGGNKDKKSSKKFKR). The span at 434 to 448 (NKDRGNKERGGNKDK) shows a compositional bias: basic and acidic residues.

Belongs to the DEAD box helicase family. DDX47/RRP3 subfamily. In terms of tissue distribution, expressed in all tissues and organs examined including root, cotyledon, first and second leaves, third and fourth leaves, fifth and sixth leaves, shoot apex, flower, flower bud, cauline leaf and rosette leaves.

It localises to the nucleus. It is found in the nucleolus. It carries out the reaction ATP + H2O = ADP + phosphate + H(+). Involved in leaf polarity establishment by functioning cooperatively with AS2 to repress abaxial genes ARF3, ARF4, KAN1, KAN2, YAB1 and YAB5, and the knox homeobox genes KNAT1, KNAT2, KNAT6, and STM to promote adaxial development in leaf primordia at shoot apical meristems at high temperatures. Involved in the processing of pre-rRNA intermediates at high temperatures. This chain is DEAD-box ATP-dependent RNA helicase 10 (RH10), found in Arabidopsis thaliana (Mouse-ear cress).